The following is a 512-amino-acid chain: ATP synthase subunit alpha 2 (512 aa).

169 to 176 (GDRQTGKT) serves as a coordination point for ATP.

The protein belongs to the ATPase alpha/beta chains family. In terms of assembly, F-type ATPases have 2 components, CF(1) - the catalytic core - and CF(0) - the membrane proton channel. CF(1) has five subunits: alpha(3), beta(3), gamma(1), delta(1), epsilon(1). CF(0) has three main subunits: a(1), b(2) and c(9-12). The alpha and beta chains form an alternating ring which encloses part of the gamma chain. CF(1) is attached to CF(0) by a central stalk formed by the gamma and epsilon chains, while a peripheral stalk is formed by the delta and b chains.

The protein resides in the cell inner membrane. It catalyses the reaction ATP + H2O + 4 H(+)(in) = ADP + phosphate + 5 H(+)(out). Produces ATP from ADP in the presence of a proton gradient across the membrane. The alpha chain is a regulatory subunit. The protein is ATP synthase subunit alpha 2 of Vibrio campbellii (strain ATCC BAA-1116).